Reading from the N-terminus, the 312-residue chain is Apolipoprotein E (312 aa).

The first 18 residues, 1-18 (MKALWALLLVPLLTGCLA), serve as a signal peptide directing secretion. 8 tandem repeats follow at residues 72 to 93 (VLME…EQLG), 94 to 115 (PVAE…ARLG), 116 to 137 (ADME…TMLG), 138 to 159 (QSTE…KRLM), 160 to 181 (RDAD…EGAE), 182 to 203 (RGVS…QRTA), 204 to 225 (NLGA…DRIR), and 226 to 247 (GRLE…EQME). The tract at residues 72–247 (VLMEDTMTEV…RLEEVREQME (176 aa)) is 8 X 22 AA approximate tandem repeats. Residue methionine 135 is modified to Methionine sulfoxide. Serine 139 bears the Phosphoserine mark. Positions 150 to 160 (HLRKMRKRLMR) are LDL and other lipoprotein receptors binding. The tract at residues 150 to 160 (HLRKMRKRLMR) is LDL receptor binding. 154–157 (MRKR) serves as a coordination point for heparin. A lipid-binding and lipoprotein association region spans residues 202-282 (TANLGAGAAQ…GWFEPLVEDM (81 aa)). 221 to 228 (SDRIRGRL) serves as a coordination point for heparin. The homooligomerization stretch occupies residues 258 to 312 (QQIRLQAEIFQARIKGWFEPLVEDMQRQWANLMEKIQASVATNSIASTTVPLENQ). Residues 270–282 (RIKGWFEPLVEDM) form a specificity for association with VLDL region.

Belongs to the apolipoprotein A1/A4/E family. In terms of assembly, homotetramer. May interact with ABCA1; functionally associated with ABCA1 in the biogenesis of HDLs. May interact with APP/A4 amyloid-beta peptide; the interaction is extremely stable in vitro but its physiological significance is unclear. May interact with MAPT. May interact with MAP2. In the cerebrospinal fluid, interacts with secreted SORL1. Interacts with PMEL; this allows the loading of PMEL luminal fragment on ILVs to induce fibril nucleation. Post-translationally, APOE exists as multiple glycosylated and sialylated glycoforms within cells and in plasma. The extent of glycosylation and sialylation are tissue and context specific. In terms of processing, glycated in plasma VLDL. Phosphorylated by FAM20C in the extracellular medium.

The protein localises to the secreted. The protein resides in the extracellular space. Its subcellular location is the extracellular matrix. It localises to the extracellular vesicle. It is found in the endosome. The protein localises to the multivesicular body. Its function is as follows. APOE is an apolipoprotein, a protein associating with lipid particles, that mainly functions in lipoprotein-mediated lipid transport between organs via the plasma and interstitial fluids. APOE is a core component of plasma lipoproteins and is involved in their production, conversion and clearance. Apolipoproteins are amphipathic molecules that interact both with lipids of the lipoprotein particle core and the aqueous environment of the plasma. As such, APOE associates with chylomicrons, chylomicron remnants, very low density lipoproteins (VLDL) and intermediate density lipoproteins (IDL) but shows a preferential binding to high-density lipoproteins (HDL). It also binds a wide range of cellular receptors including the LDL receptor/LDLR and the very low-density lipoprotein receptor/VLDLR that mediate the cellular uptake of the APOE-containing lipoprotein particles. Finally, APOE also has a heparin-binding activity and binds heparan-sulfate proteoglycans on the surface of cells, a property that supports the capture and the receptor-mediated uptake of APOE-containing lipoproteins by cells. The sequence is that of Apolipoprotein E (Apoe) from Rattus norvegicus (Rat).